A 236-amino-acid polypeptide reads, in one-letter code: tRNA (guanine-N(1)-)-methyltransferase (236 aa).

Residues Gly112 and Val132–Leu137 contribute to the S-adenosyl-L-methionine site.

The protein belongs to the RNA methyltransferase TrmD family. Homodimer.

The protein localises to the cytoplasm. It carries out the reaction guanosine(37) in tRNA + S-adenosyl-L-methionine = N(1)-methylguanosine(37) in tRNA + S-adenosyl-L-homocysteine + H(+). In terms of biological role, specifically methylates guanosine-37 in various tRNAs. The polypeptide is tRNA (guanine-N(1)-)-methyltransferase (Campylobacter curvus (strain 525.92)).